The following is a 257-amino-acid chain: Deoxyribose-phosphate aldolase (257 aa).

Asp-102 serves as the catalytic Proton donor/acceptor. Residue Lys-166 is the Schiff-base intermediate with acetaldehyde of the active site. Lys-198 (proton donor/acceptor) is an active-site residue.

It belongs to the DeoC/FbaB aldolase family. DeoC type 2 subfamily.

Its subcellular location is the cytoplasm. The enzyme catalyses 2-deoxy-D-ribose 5-phosphate = D-glyceraldehyde 3-phosphate + acetaldehyde. It participates in carbohydrate degradation; 2-deoxy-D-ribose 1-phosphate degradation; D-glyceraldehyde 3-phosphate and acetaldehyde from 2-deoxy-alpha-D-ribose 1-phosphate: step 2/2. Functionally, catalyzes a reversible aldol reaction between acetaldehyde and D-glyceraldehyde 3-phosphate to generate 2-deoxy-D-ribose 5-phosphate. The chain is Deoxyribose-phosphate aldolase from Shewanella amazonensis (strain ATCC BAA-1098 / SB2B).